Here is a 2587-residue protein sequence, read N- to C-terminus: Clavatol synthase claF (2587 aa).

The segment at 93 to 256 (LLSPLVVIVQ…TEVALSGRFH (164 aa)) is N-terminal acylcarrier protein transacylase domain (SAT). Residue Cys-137 is the Nucleophile; for transacylase activity of the active site. His-256 acts as the Proton donor/acceptor; for transacylase activity in catalysis. The Ketosynthase family 3 (KS3) domain occupies 383–799 (DDQIAVIGMA…GSNASMIITQ (417 aa)). Residues Cys-548, His-683, and His-722 each act as for beta-ketoacyl synthase activity in the active site. The tract at residues 912–1222 (CFGGQISTYV…ESLPLLAEAT (311 aa)) is malonyl-CoA:ACP transacylase (MAT) domain. The interval 1284–1416 (PKGLTTFIGF…GSIVFLPASD (133 aa)) is N-terminal hotdog fold. Residues 1284–1595 (PKGLTTFIGF…YRLVPMDSMR (312 aa)) enclose the PKS/mFAS DH domain. Positions 1315-1593 (LTSANVALNT…ISYRLVPMDS (279 aa)) are product template (PT) domain. Residues 1436–1595 (ASLLQGNGAD…YRLVPMDSMR (160 aa)) are C-terminal hotdog fold. Residues 1609–1635 (STAAVSSKSTPVHAPTPTTTVSSTPSS) form a disordered region. Positions 1617–1635 (STPVHAPTPTTTVSSTPSS) are enriched in low complexity. The Carrier domain maps to 1654–1728 (PDISAKMCEI…SLVSCIRSTL (75 aa)). Ser-1688 bears the O-(pantetheine 4'-phosphoryl)serine mark. Residues Tyr-1947, His-2059, and Glu-2085 each act as for methyltransferase activity in the active site. Residues 1952–2126 (VNTVWIKQLE…ATYWEKVLQS (175 aa)) are methyltransferase (CMeT) domain. The tract at residues 2208–2452 (SLSSGQCVLV…KILPELDGTL (245 aa)) is NADPH-binding (R) domain.

Pantetheine 4'-phosphate is required as a cofactor.

It carries out the reaction 3 malonyl-CoA + acetyl-CoA + AH2 + 2 S-adenosyl-L-methionine + H(+) = clavatol + A + 2 S-adenosyl-L-homocysteine + 3 CO2 + 4 CoA + H2O. The protein operates within secondary metabolite biosynthesis. Functionally, non-reducing polyketide synthase; part of the cla gene cluster that produces clavatol and ortho-quinone methide. The clavatol biosynthesis cluster cla and the terrestric acid cluster tra are both involved in the production of peniphenones and penilactones. The non-reducing PKS claF is responsible for the formation of clavatol from successive condensations of 3 malonyl-CoA units, presumably with a simple acetyl-CoA starter unit, and 2 methylation steps. The esterase claE probably collaborates with claF by catalyzing the hydrolysis of ACP-bound acyl intermediates to free the ACP from stalled intermediates. The clavatol oxidase claD then converts clavatol to hydroxyclavatol. Spontaneous dehydration of hydroxyclavatol leads to the accumulation of the highly active ortho-quinone methide. On the other hand, the PKS-NRPS hybrid traA is involved in the formation of crustosic acid, with the help of traB and traD. The polyketide synthase module (PKS) of traA is responsible for the synthesis of the polyketide backbone via the condensation of an acetyl-CoA starter unit with 3 malonyl-CoA units. The downstream nonribosomal peptide synthetase (NRPS) module then amidates the carboxyl end of the polyketide with L-malic acid. Because traA lacks a designated enoylreductase (ER) domain, the required activity is provided the enoyl reductase traG. Crustosic acid undergoes decarboxylation and isomerization to the terrestric acid, catalyzed by the 2-oxoglutarate-dependent dioxygenase traH. Both acids are further converted to the 2 gamma-butyrolactones (R)-5-methyltetronic acid and (S)-5-carboxylmethyltetronic acid, with involvement of the cytochrome P450 monooxygenase claJ. Spontaneous addition of the methide to these gamma-butyrolactones leads to peniphenone D and penilactone D, which undergo again stereospecific attacking by methide to give penilactones A and B. In Penicillium crustosum (Blue mold fungus), this protein is Clavatol synthase claF.